Consider the following 419-residue polypeptide: DNA polymerase IV (419 aa).

The UmuC domain maps to 12–193; it reads IFHIDMNCFY…MSVEEMYGIG (182 aa). Positions 16 and 112 each coordinate Mg(2+). Residue Glu113 is part of the active site. The segment at 388–419 is disordered; it reads IITSQKNKNESQENQQPRTSFQKDFLDDYKKP.

Belongs to the DNA polymerase type-Y family. As to quaternary structure, monomer. Mg(2+) serves as cofactor.

The protein localises to the cytoplasm. It catalyses the reaction DNA(n) + a 2'-deoxyribonucleoside 5'-triphosphate = DNA(n+1) + diphosphate. Functionally, poorly processive, error-prone DNA polymerase involved in untargeted mutagenesis. Copies undamaged DNA at stalled replication forks, which arise in vivo from mismatched or misaligned primer ends. These misaligned primers can be extended by PolIV. Exhibits no 3'-5' exonuclease (proofreading) activity. May be involved in translesional synthesis, in conjunction with the beta clamp from PolIII. This chain is DNA polymerase IV, found in Oceanobacillus iheyensis (strain DSM 14371 / CIP 107618 / JCM 11309 / KCTC 3954 / HTE831).